Reading from the N-terminus, the 406-residue chain is Acetate kinase (406 aa).

A Mg(2+)-binding site is contributed by Asn-8. Residue Lys-15 coordinates ATP. Arg-92 is a binding site for substrate. Asp-149 (proton donor/acceptor) is an active-site residue. ATP contacts are provided by residues His-209–Gly-213, Asp-283–Arg-285, and Gly-331–Asn-335. Position 385 (Glu-385) interacts with Mg(2+).

This sequence belongs to the acetokinase family. As to quaternary structure, homodimer. Requires Mg(2+) as cofactor. Mn(2+) serves as cofactor.

Its subcellular location is the cytoplasm. The enzyme catalyses acetate + ATP = acetyl phosphate + ADP. Its pathway is metabolic intermediate biosynthesis; acetyl-CoA biosynthesis; acetyl-CoA from acetate: step 1/2. Its function is as follows. Catalyzes the formation of acetyl phosphate from acetate and ATP. Can also catalyze the reverse reaction. This Corynebacterium aurimucosum (strain ATCC 700975 / DSM 44827 / CIP 107346 / CN-1) (Corynebacterium nigricans) protein is Acetate kinase.